Reading from the N-terminus, the 557-residue chain is Portal protein (557 aa).

This sequence belongs to the herpesviridae portal protein family. Homododecamerizes. Interacts with terminase subunits TRM1 and TRM3.

It localises to the virion. The protein resides in the host nucleus. In terms of biological role, forms a portal in the viral capsid through which viral DNA is translocated during DNA packaging. Assembles as a dodecamer at a single fivefold axe of the T=16 icosahedric capsid. Binds to the molecular motor that translocates the viral DNA, termed terminase. This is Portal protein (43) from Connochaetes taurinus (Blue wildebeest).